The following is a 267-amino-acid chain: Type II pantothenate kinase (267 aa).

Residue 6 to 13 coordinates ATP; it reads DAGGTLIK. Glu70 functions as the Proton acceptor in the catalytic mechanism. ATP contacts are provided by residues Thr99, 121-125, Tyr137, and Ser225; that span reads GGMIQ.

Belongs to the type II pantothenate kinase family. In terms of assembly, homodimer.

The protein localises to the cytoplasm. It catalyses the reaction (R)-pantothenate + ATP = (R)-4'-phosphopantothenate + ADP + H(+). The protein operates within cofactor biosynthesis; coenzyme A biosynthesis; CoA from (R)-pantothenate: step 1/5. In terms of biological role, catalyzes the phosphorylation of pantothenate (Pan), the first step in CoA biosynthesis. This chain is Type II pantothenate kinase, found in Staphylococcus aureus (strain bovine RF122 / ET3-1).